The chain runs to 505 residues: uncharacterized protein (505 aa).

The chain crosses the membrane as a helical span at residues 11 to 27; it reads IGIIGGGIVGWLAAIAL.

Its subcellular location is the membrane. This is an uncharacterized protein from Sinorhizobium fredii (strain NBRC 101917 / NGR234).